Consider the following 632-residue polypeptide: Eukaryotic peptide chain release factor GTP-binding subunit ERF3B (632 aa).

2 disordered regions span residues 1–31 (MDLG…GDGI) and 162–200 (SEAK…SIPS). Over residues 178–192 (ESVKEVMEEKEEVRK) the composition is skewed to basic and acidic residues. Residues 205–429 (KEHVNVVFIG…YLDSLPNFNR (225 aa)) enclose the tr-type G domain. Positions 214–221 (GHVDAGKS) are G1. A GTP-binding site is contributed by 217–222 (DAGKST). The interval 270–274 (GKTVE) is G2. Residues 291 to 294 (DAPG) are G3. GTP contacts are provided by residues 353–356 (NKMD) and 395–397 (SGL). The G4 stretch occupies residues 353–356 (NKMD). A G5 region spans residues 395-397 (SGL).

The protein belongs to the TRAFAC class translation factor GTPase superfamily. Classic translation factor GTPase family. ERF3 subfamily. In terms of assembly, component of the eRF1-eRF3-GTP ternary complex, composed of ETF1/ERF1 and ERF3 (GSPT1/ERF3A or GSPT2/ERF3B) and GTP. Component of the transient SURF (SMG1-UPF1-eRF1-eRF3) complex. Interacts with UPF1 and PABPC1. In terms of tissue distribution, highly expressed in brain. Moderately expressed in spleen and lung. Weakly expressed in heart, liver and kidney. Expression during the cell-cycle progression is constant.

It is found in the cytoplasm. The catalysed reaction is GTP + H2O = GDP + phosphate + H(+). GTPase component of the eRF1-eRF3-GTP ternary complex, a ternary complex that mediates translation termination in response to the termination codons UAA, UAG and UGA. GSPT2/ERF3B mediates ETF1/ERF1 delivery to stop codons: The eRF1-eRF3-GTP complex binds to a stop codon in the ribosomal A-site. GTP hydrolysis by GSPT2/ERF3B induces a conformational change that leads to its dissociation, permitting ETF1/ERF1 to accommodate fully in the A-site. Component of the transient SURF complex which recruits UPF1 to stalled ribosomes in the context of nonsense-mediated decay (NMD) of mRNAs containing premature stop codons. The sequence is that of Eukaryotic peptide chain release factor GTP-binding subunit ERF3B (Gspt2) from Mus musculus (Mouse).